The following is a 341-amino-acid chain: HTH-type transcriptional repressor PurR (341 aa).

Residues 2–56 enclose the HTH lacI-type domain; it reads ATIKDVAKHAGVSTTTVSHVINKTRFVAEDTKAAVWAAIKALNYSPSAVARSLKV. Residues 4–23 constitute a DNA-binding region (H-T-H motif); it reads IKDVAKHAGVSTTTVSHVIN. The DNA-binding element occupies 48–56; sequence SAVARSLKV. Positions 73, 190, 192, 221, and 275 each coordinate hypoxanthine.

As to quaternary structure, homodimer.

The protein operates within purine metabolism; purine nucleotide biosynthesis [regulation]. In terms of biological role, is the main repressor of the genes involved in the de novo synthesis of purine nucleotides, regulating purB, purC, purEK, purF, purHD, purL, purMN and guaBA expression. PurR is allosterically activated to bind its cognate DNA by binding the purine corepressors, hypoxanthine or guanine, thereby effecting transcription repression. The chain is HTH-type transcriptional repressor PurR from Photorhabdus laumondii subsp. laumondii (strain DSM 15139 / CIP 105565 / TT01) (Photorhabdus luminescens subsp. laumondii).